Consider the following 272-residue polypeptide: Phosphate import ATP-binding protein PstB (272 aa).

An ABC transporter domain is found at 20-267; it reads VKKEVVYETN…PADQRTADYI (248 aa). 58–65 serves as a coordination point for ATP; that stretch reads GPSGCGKS.

Belongs to the ABC transporter superfamily. Phosphate importer (TC 3.A.1.7) family. As to quaternary structure, the complex is composed of two ATP-binding proteins (PstB), two transmembrane proteins (PstC and PstA) and a solute-binding protein (PstS).

It localises to the cell membrane. The catalysed reaction is phosphate(out) + ATP + H2O = ADP + 2 phosphate(in) + H(+). Functionally, part of the ABC transporter complex PstSACB involved in phosphate import. Responsible for energy coupling to the transport system. This Geobacillus kaustophilus (strain HTA426) protein is Phosphate import ATP-binding protein PstB.